The chain runs to 208 residues: Large ribosomal subunit protein uL4 (208 aa).

Positions 45–78 are disordered; sequence RQGTAKSKERSEMSGSTRKLGRQKGSGGARRGDI.

This sequence belongs to the universal ribosomal protein uL4 family. As to quaternary structure, part of the 50S ribosomal subunit.

Its function is as follows. One of the primary rRNA binding proteins, this protein initially binds near the 5'-end of the 23S rRNA. It is important during the early stages of 50S assembly. It makes multiple contacts with different domains of the 23S rRNA in the assembled 50S subunit and ribosome. Forms part of the polypeptide exit tunnel. The chain is Large ribosomal subunit protein uL4 from Azobacteroides pseudotrichonymphae genomovar. CFP2.